We begin with the raw amino-acid sequence, 209 residues long: Uracil phosphoribosyltransferase (209 aa).

5-phospho-alpha-D-ribose 1-diphosphate is bound by residues R79, R104, and 131–139 (DPMLATGGS). Residues I194 and 199–201 (GDA) each bind uracil. Position 200 (D200) interacts with 5-phospho-alpha-D-ribose 1-diphosphate.

Belongs to the UPRTase family. Mg(2+) serves as cofactor.

It catalyses the reaction UMP + diphosphate = 5-phospho-alpha-D-ribose 1-diphosphate + uracil. It functions in the pathway pyrimidine metabolism; UMP biosynthesis via salvage pathway; UMP from uracil: step 1/1. Its activity is regulated as follows. Allosterically activated by GTP. In terms of biological role, catalyzes the conversion of uracil and 5-phospho-alpha-D-ribose 1-diphosphate (PRPP) to UMP and diphosphate. The polypeptide is Uracil phosphoribosyltransferase (Brevibacillus brevis (strain 47 / JCM 6285 / NBRC 100599)).